Consider the following 293-residue polypeptide: Glycerophosphodiester phosphodiesterase (293 aa).

Positions 1-26 (MRKNRILALFVLSLGLLSFMVTPVSA) are cleaved as a signal peptide. In terms of domain architecture, GP-PDE spans 38 to 290 (ILTVAHRGAS…NYPDLFHKVK (253 aa)). His43 serves as the catalytic Proton acceptor. His43, Arg44, and Glu70 together coordinate sn-glycerol 3-phosphate. Residues Glu70 and Asp72 each contribute to the Ca(2+) site. 3 residues coordinate sn-glycerol 3-phosphate: His85, Glu152, and Gln188. Catalysis depends on His85, which acts as the Proton donor. Residue Glu152 coordinates Ca(2+).

It belongs to the glycerophosphoryl diester phosphodiesterase family. The cofactor is Ca(2+).

Its subcellular location is the secreted. The enzyme catalyses a sn-glycero-3-phosphodiester + H2O = an alcohol + sn-glycerol 3-phosphate + H(+). Its function is as follows. Glycerophosphodiester phosphodiesterase hydrolyzes glycerophosphodiesters into glycerol-3-phosphate (G3P) and the corresponding alcohol. Involved in wall teichoic acid (WTA) metabolism during phosphate starvation. Catalyzes the degradation of WTA, enabling the utilization of WTA as a phosphate reserve under limiting conditions. Is highly selective for the poly(gylcerol phosphate) WTA backbone and catalyzes exolytic cleavage of individual monomer units. In vitro is active toward the WTA oligomer mimics glycerophosphoglycerol (GPG) and bis-glycerophosphoglycerol (bGPG). The chain is Glycerophosphodiester phosphodiesterase from Bacillus subtilis (strain 168).